Consider the following 529-residue polypeptide: uncharacterized protein (529 aa).

Asp-389 serves as the catalytic Nucleophile. Residue Glu-392 is part of the active site. Asp-459 functions as the Proton donor in the catalytic mechanism.

This sequence belongs to the glycosyl hydrolase 31 family.

This is an uncharacterized protein from Pseudescherichia vulneris (Escherichia vulneris).